The sequence spans 59 residues: Metallothionein-1B (59 aa).

The beta stretch occupies residues 1-29; it reads MPGPCCNDKCVCQEGGCKAGCQCTSCRCS. 17 residues coordinate a divalent metal cation: C5, C6, C10, C17, C21, C23, C26, C28, C31, C34, C38, C40, C46, C50, C54, C56, and C57. The alpha stretch occupies residues 30–59; that stretch reads PCQKCTSGCKCATKEECSKTCTKPCSCCPK.

The protein belongs to the metallothionein superfamily. Type 3 family.

Binds six divalent metal ions. Known to bind copper and cadmium. The protein is Metallothionein-1B of Callinectes sapidus (Blue crab).